Consider the following 695-residue polypeptide: Potassium voltage-gated channel subfamily KQT member 4 (695 aa).

Residues 1–21 are disordered; it reads MAEAPPRRLGLGPPPGDAPRA. The Cytoplasmic portion of the chain corresponds to 1 to 96; sequence MAEAPPRRLG…VYNVLERPRG (96 aa). Arg93 serves as a coordination point for a 1,2-diacyl-sn-glycero-3-phospho-(1D-myo-inositol-4,5-bisphosphate). A helical membrane pass occupies residues 97-118; sequence WAFVYHVFIFLLVFSCLVLSVL. Residues 119 to 129 lie on the Extracellular side of the membrane; the sequence is STIQEHQELAN. The chain crosses the membrane as a helical span at residues 130 to 152; that stretch reads ECLLILEFVMIVVFGLEYIIRVW. Residues 153 to 168 are Cytoplasmic-facing; that stretch reads SAGCCCRYRGWQGRFR. A helical membrane pass occupies residues 169 to 191; sequence FARKPFCVIDFIVFVASVAVIAA. Lys172 is a binding site for a 1,2-diacyl-sn-glycero-3-phospho-(1D-myo-inositol-4,5-bisphosphate). Residues 192-202 are Extracellular-facing; that stretch reads GTQGNIFATSA. A helical; Voltage-sensor membrane pass occupies residues 203–223; sequence LRSMRFLQILRMVRMDRRGGT. 4 residues coordinate a 1,2-diacyl-sn-glycero-3-phospho-(1D-myo-inositol-4,5-bisphosphate): Arg219, Arg220, Lys225, and Ser235. Over 224 to 235 the chain is Cytoplasmic; sequence WKLLGSVVYAHS. The helical transmembrane segment at 236–258 threads the bilayer; sequence KELITAWYIGFLVLIFASFLVYL. The Extracellular segment spans residues 259–270; it reads AEKDANSDFSSY. The segment at residues 271 to 292 is an intramembrane region (pore-forming); it reads ADSLWWGTITLTTIGYGDKTPH. Residue Thr293 is a topological domain, extracellular. Residues 294–322 form a helical membrane-spanning segment; the sequence is WLGRVLAAGFALLGISFFALPAGILGSGF. At 323-695 the chain is on the cytoplasmic side; it reads ALKVQEQHRQ…ISRSVSTNMD (373 aa). His330 and Lys333 together coordinate a 1,2-diacyl-sn-glycero-3-phospho-(1D-myo-inositol-4,5-bisphosphate). Positions 342-351 are interaction with CALM; it reads AANLIQAAWR. The disordered stretch occupies residues 441 to 483; it reads RMSSSQKRTGPSKQHLAPPPIPTSPSSEQVGEASSPSKVQKSW. 2 stretches are compositionally biased toward polar residues: residues 442–452 and 464–483; these read MSSSQKRTGPS and SPSS…QKSW. An interaction with CALM region spans residues 535–549; sequence RSVRILKFLVAKRKF. Residues 546-650 form a C-terminal assembly domain (tetramerization) region; the sequence is KRKFKETLRP…SRCLRSGTSA (105 aa). Residues 588 to 608 are disordered; the sequence is GRGPGDRKTREKGDKGPSDTE. Basic and acidic residues predominate over residues 591-605; sequence PGDRKTREKGDKGPS.

Belongs to the potassium channel family. KQT (TC 1.A.1.15) subfamily. Kv7.4/KCNQ4 sub-subfamily. As to quaternary structure, homotetramer. Interacts (via C-terminus) with calmodulin; forms a heterooctameric structure (with 4:4 KCNQ1:CALM stoichiometry); the interaction is calcium-independent, constitutive, participates in the proper assembly of a functional channel. The interaction with calcium-free CALM controls channel trafficking whereas interaction with calcium-bound CALM regulates channel gating. May form a functional heteromultimeric channel with KCNQ3. Interacts with HSP90AB1; promotes cell surface expression of KCNQ4. In terms of tissue distribution, expressed in both the inner (IHCs) and the outer hair cells (OHCs) of the cochlea. Reciprocal longitudinal gradients of expression is present in IHCs and OHCs. The strongest expression in IHCs is in the base of the cochlea and in the apex for OHCs. A basal to apical gradient of expression is also present in both type I and type II spiral ganglion cells.

It localises to the basal cell membrane. The catalysed reaction is K(+)(in) = K(+)(out). With respect to regulation, two molecules of phosphatidylinositol-4,5-bisphosphate (PIP2-I and PIP2-II) are essential to activate KCNQ4 channel by inducing the coupling of the voltage-sensing domain (VSD) and the pore-forming domain (PD). Upon channel activation, PIP2-I and PIP2-II disrupt the VSD-calmodulin/CALM interaction, causing the release of CALM from the VSD which triggers the opening of the gate. Calcium suppresses KCNQ4 channel current through calcium-bound CALM C-terminus. Therefore CALM acts as calcium sensor that controls channel activity. In terms of biological role, pore-forming subunit of the voltage-gated potassium (Kv) channel involved in the regulation of sensory cells excitability in the cochlea. KCNQ4/Kv7.4 channel is composed of 4 pore-forming subunits assembled as tetramers. Promotes the outflow of potassium ions in the repolarization phase of action potential which plays a role in regulating membrane potential of excitable cells. The channel conducts a slowly activating and deactivating current. Current often shows some inward rectification at positive potentials. Channel may be selectively permeable in vitro to other cations besides potassium, in decreasing order of affinity K(+) = Rb(+) &gt; Cs(+) &gt; Na(+). Important for normal physiological function of inner ear such as sensory perception of sound. The sequence is that of Potassium voltage-gated channel subfamily KQT member 4 from Rattus norvegicus (Rat).